The chain runs to 389 residues: Phospho-N-acetylmuramoyl-pentapeptide-transferase (389 aa).

A run of 11 helical transmembrane segments spans residues 21–41 (YITM…LVAG), 71–91 (TPTM…LLWA), 97–117 (FVWV…MDDY), 134–154 (FFWQ…AVSA), 167–187 (WVSS…VPFF), 190–210 (VSYP…IVGT), 222–242 (GLAI…AYVV), 259–279 (AAEL…FLWF), 286–306 (VFMG…IAVI), 311–331 (IVLF…MMQV), and 366–386 (QVVV…LSTL).

The protein belongs to the glycosyltransferase 4 family. MraY subfamily. Requires Mg(2+) as cofactor.

It localises to the cell inner membrane. The catalysed reaction is UDP-N-acetyl-alpha-D-muramoyl-L-alanyl-gamma-D-glutamyl-meso-2,6-diaminopimeloyl-D-alanyl-D-alanine + di-trans,octa-cis-undecaprenyl phosphate = di-trans,octa-cis-undecaprenyl diphospho-N-acetyl-alpha-D-muramoyl-L-alanyl-D-glutamyl-meso-2,6-diaminopimeloyl-D-alanyl-D-alanine + UMP. It functions in the pathway cell wall biogenesis; peptidoglycan biosynthesis. In terms of biological role, catalyzes the initial step of the lipid cycle reactions in the biosynthesis of the cell wall peptidoglycan: transfers peptidoglycan precursor phospho-MurNAc-pentapeptide from UDP-MurNAc-pentapeptide onto the lipid carrier undecaprenyl phosphate, yielding undecaprenyl-pyrophosphoryl-MurNAc-pentapeptide, known as lipid I. The polypeptide is Phospho-N-acetylmuramoyl-pentapeptide-transferase (Bordetella petrii (strain ATCC BAA-461 / DSM 12804 / CCUG 43448)).